Here is a 123-residue protein sequence, read N- to C-terminus: UPF0299 membrane protein VV1471 (123 aa).

A run of 4 helical transmembrane segments spans residues 8–28 (LFGLVVSFGLIFLALTIGSGI), 35–55 (SVPGSVIGMLVLFVSMAIGLV), 71–91 (MILLFVPISVGLMEHFDMLIA), and 94–114 (LPIIASAIGGSLIVLVSLGWL).

The protein belongs to the UPF0299 family.

It localises to the cell inner membrane. The polypeptide is UPF0299 membrane protein VV1471 (Vibrio vulnificus (strain YJ016)).